A 488-amino-acid polypeptide reads, in one-letter code: Protein nucleotidyltransferase YdiU (488 aa).

G91, G93, R94, K114, D126, G127, R177, and R184 together coordinate ATP. D253 functions as the Proton acceptor in the catalytic mechanism. Positions 254 and 263 each coordinate Mg(2+). D263 is an ATP binding site.

Belongs to the SELO family. Mg(2+) serves as cofactor. Mn(2+) is required as a cofactor.

It carries out the reaction L-seryl-[protein] + ATP = 3-O-(5'-adenylyl)-L-seryl-[protein] + diphosphate. The enzyme catalyses L-threonyl-[protein] + ATP = 3-O-(5'-adenylyl)-L-threonyl-[protein] + diphosphate. The catalysed reaction is L-tyrosyl-[protein] + ATP = O-(5'-adenylyl)-L-tyrosyl-[protein] + diphosphate. It catalyses the reaction L-histidyl-[protein] + UTP = N(tele)-(5'-uridylyl)-L-histidyl-[protein] + diphosphate. It carries out the reaction L-seryl-[protein] + UTP = O-(5'-uridylyl)-L-seryl-[protein] + diphosphate. The enzyme catalyses L-tyrosyl-[protein] + UTP = O-(5'-uridylyl)-L-tyrosyl-[protein] + diphosphate. Its function is as follows. Nucleotidyltransferase involved in the post-translational modification of proteins. It can catalyze the addition of adenosine monophosphate (AMP) or uridine monophosphate (UMP) to a protein, resulting in modifications known as AMPylation and UMPylation. The protein is Protein nucleotidyltransferase YdiU of Bacillus thuringiensis subsp. konkukian (strain 97-27).